A 265-amino-acid chain; its full sequence is Energy-coupling factor transporter transmembrane protein EcfT (265 aa).

6 consecutive transmembrane segments (helical) span residues methionine 26–alanine 46, valine 47–phenylalanine 67, proline 72–alanine 92, valine 107–methionine 127, leucine 152–methionine 172, and histidine 243–leucine 263.

It belongs to the energy-coupling factor EcfT family. As to quaternary structure, forms a stable energy-coupling factor (ECF) transporter complex composed of 2 membrane-embedded substrate-binding proteins (S component), 2 ATP-binding proteins (A component) and 2 transmembrane proteins (T component). May be able to interact with more than 1 S component at a time.

It is found in the cell membrane. Functionally, transmembrane (T) component of an energy-coupling factor (ECF) ABC-transporter complex. Unlike classic ABC transporters this ECF transporter provides the energy necessary to transport a number of different substrates. In Macrococcus caseolyticus (strain JCSC5402) (Macrococcoides caseolyticum), this protein is Energy-coupling factor transporter transmembrane protein EcfT.